Consider the following 277-residue polypeptide: Anamorsin homolog 2 (277 aa).

Residues 1-141 form an N-terminal SAM-like domain region; the sequence is MDTQPIVLVI…RKPAWDTGSS (141 aa). Residues 141–186 form a linker region; it reads SFKLKKKVAQKPANVVTFDIPAFKVQLGDDLDDLIDEDSLLTEEDL. The [2Fe-2S] cluster site is built by Cys-197, Cys-207, Cys-210, and Cys-212. Positions 197-212 are fe-S binding site A; sequence CEVGKAGRKACKNCTC. [4Fe-4S] cluster is bound by residues Cys-238, Cys-241, Cys-249, and Cys-252. 2 consecutive short sequence motifs (cx2C motif) follow at residues 238–241 and 249–252; these read CGSC and CSTC. Residues 238-252 form a fe-S binding site B region; that stretch reads CGSCGLGDAFRCSTC.

The protein belongs to the anamorsin family. In terms of assembly, monomer. [2Fe-2S] cluster is required as a cofactor. The cofactor is [4Fe-4S] cluster.

Its subcellular location is the cytoplasm. The protein localises to the mitochondrion intermembrane space. Its function is as follows. Component of the cytosolic iron-sulfur (Fe-S) protein assembly (CIA) machinery. Required for the maturation of extramitochondrial Fe-S proteins. Part of an electron transfer chain functioning in an early step of cytosolic Fe-S biogenesis, facilitating the de novo assembly of a [4Fe-4S] cluster on the cytosolic Fe-S scaffold complex. Electrons are transferred from NADPH via a FAD- and FMN-containing diflavin oxidoreductase. Together with the diflavin oxidoreductase, also required for the assembly of the diferric tyrosyl radical cofactor of ribonucleotide reductase (RNR), probably by providing electrons for reduction during radical cofactor maturation in the catalytic small subunit. This chain is Anamorsin homolog 2, found in Picea sitchensis (Sitka spruce).